The following is a 185-amino-acid chain: Sarcoplasmic calcium-binding proteins I, III, and IV (185 aa).

EF-hand domains follow at residues 5 to 41, 57 to 92, 102 to 137, and 138 to 173; these read FQKQKIKFTFDFFLDYNKDGSIQWEDFEEMIKRYKEV, SLEDEWRDLKGRADINKDDVVSWEEYLAMWEKTIAT, WCQNRIPFLFKGMDVSGDGIVDLEEFQNYCKNFQLQ, and CADVPAVYNVITDGGKVTFDLNRYKELYYRLLTSPA. Positions 19, 21, 23, 25, 30, 70, 72, 74, 81, 115, 117, 119, and 126 each coordinate Ca(2+).

Like parvalbumins, SCPs seem to be more abundant in fast contracting muscles, but no functional relationship can be established from this distribution. In Branchiostoma lanceolatum (Common lancelet), this protein is Sarcoplasmic calcium-binding proteins I, III, and IV.